Here is a 378-residue protein sequence, read N- to C-terminus: Virion membrane protein A16 (378 aa).

Residue G2 is the site of N-myristoyl glycine; by host attachment. Over 2-342 (GAAVTLNRIK…VVKDKIKLPT (341 aa)) the chain is Virion surface. The helical; Signal-anchor for type II membrane protein transmembrane segment at 343–363 (WLGAAITLVVISVIFYFISIY) threads the bilayer. Residues 364–378 (SRPKIKTNDINVRRR) are Intravirion-facing.

This sequence belongs to the poxviridae A16/G9/J5 family. In terms of assembly, part of a stable entry-fusion complex (EFC) which is at least composed of proteins A16, A21, A28, G3, G9, H2, J5, and L5. Formation of the viral membrane is necessary for the assembly of the complex. Interacts with G9. Post-translationally, most cysteines are linked by disulfide bonds. They are created by the viral disulfide bond formation pathway, a poxvirus-specific redox pathway that operates on the cytoplasmic side of the MV membranes.

It is found in the virion membrane. In terms of biological role, envelope protein part of the entry-fusion complex responsible for the virus membrane fusion with host cell membrane during virus entry. Also plays a role in cell-cell fusion (syncytium formation). This chain is Virion membrane protein A16, found in Oryctolagus cuniculus (Rabbit).